Here is a 145-residue protein sequence, read N- to C-terminus: MTLTNYVQEVSLADFGKPFHHKAYWNKRLKTTGGRFFPKDGHLDFNPRMLEEHGELIFRKIVRHELCHYHLYFEGRGYHHKDRDFKDLLAQVNGLRYVPTSSKSKTNHHYSCQTCGQVYQRKRRINLAKYVCGNCHGKLMEKNQS.

A SprT-like domain is found at 4–140 (TNYVQEVSLA…VCGNCHGKLM (137 aa)). H64 is a binding site for Zn(2+). Residue E65 is part of the active site. H68 is a Zn(2+) binding site.

It belongs to the SprT family. It depends on Zn(2+) as a cofactor.

The protein resides in the cytoplasm. The sequence is that of Protein SprT-like from Streptococcus pyogenes serotype M3 (strain SSI-1).